A 128-amino-acid chain; its full sequence is Fatty acid binding protein 1-B.1 (128 aa).

This sequence belongs to the calycin superfamily. Fatty-acid binding protein (FABP) family. In terms of tissue distribution, expressed in the yolk syncytial layer (YSL) and subsequently in the intestinal bulb in developing embryos and larvae. In adults, expressed in the intestine.

The protein localises to the cytoplasm. In terms of biological role, binds free fatty acids and their coenzyme A derivatives, bilirubin, and some other small molecules in the cytoplasm. May be involved in intracellular lipid transport. The polypeptide is Fatty acid binding protein 1-B.1 (fabp1b.1) (Danio rerio (Zebrafish)).